The chain runs to 145 residues: Putative pre-16S rRNA nuclease (145 aa).

This sequence belongs to the YqgF nuclease family.

It is found in the cytoplasm. Could be a nuclease involved in processing of the 5'-end of pre-16S rRNA. The polypeptide is Putative pre-16S rRNA nuclease (Pseudomonas fluorescens (strain SBW25)).